The following is a 479-amino-acid chain: Altronate oxidoreductase (479 aa).

Isoleucine 18–alanine 29 serves as a coordination point for NAD(+).

The protein belongs to the mannitol dehydrogenase family. UxaB subfamily.

It carries out the reaction D-altronate + NAD(+) = keto-D-tagaturonate + NADH + H(+). Its pathway is carbohydrate metabolism; pentose and glucuronate interconversion. This Bacteroides thetaiotaomicron (strain ATCC 29148 / DSM 2079 / JCM 5827 / CCUG 10774 / NCTC 10582 / VPI-5482 / E50) protein is Altronate oxidoreductase.